Consider the following 464-residue polypeptide: Dihydrolipoyl dehydrogenase (464 aa).

FAD contacts are provided by residues 33–41 (EPKYWGGVC), lysine 50, and glycine 113. Residues cysteine 41 and cysteine 46 are joined by a disulfide bond. NAD(+) contacts are provided by residues 178-182 (GAGAI), glutamate 201, and 266-269 (AIGF). Aspartate 309 and alanine 317 together coordinate FAD. Histidine 443 (proton acceptor) is an active-site residue.

The protein belongs to the class-I pyridine nucleotide-disulfide oxidoreductase family. As to quaternary structure, homodimer. Part of the PDH complex, consisting of multiple copies of AceE (E1), DlaT (E2) and Lpd (E3), and of the BCKADH complex, consisting of multiple copies of BkdA/BkdB (E1), BkdC (E2) and Lpd (E3). It depends on FAD as a cofactor.

Its subcellular location is the cytoplasm. The catalysed reaction is N(6)-[(R)-dihydrolipoyl]-L-lysyl-[protein] + NAD(+) = N(6)-[(R)-lipoyl]-L-lysyl-[protein] + NADH + H(+). Lipoamide dehydrogenase is a component of the alpha-ketoacid dehydrogenase complexes. Catalyzes the reoxidation of dihydrolipoyl groups which are covalently attached to the lipoate acyltransferase components (E2) of the complexes. This is Dihydrolipoyl dehydrogenase (lpd) from Mycobacterium bovis (strain ATCC BAA-935 / AF2122/97).